The following is a 383-amino-acid chain: 3-phytase (383 aa).

Residues 1–26 (MNHSKTLLLTAAAGLMLTCGAVSSQA) form the signal peptide. Positions 27–30 (KHKL) are excised as a propeptide. One can recognise a BPP domain in the interval 31-362 (SDPYHFTVNA…VPWERIADKI (332 aa)). The interval 364–383 (FHPQVNKQVDPRKMTDRSGK) is disordered. A compositionally biased stretch (basic and acidic residues) spans 372–383 (VDPRKMTDRSGK).

The protein resides in the secreted. It catalyses the reaction 1D-myo-inositol hexakisphosphate + H2O = 1D-myo-inositol 1,2,4,5,6-pentakisphosphate + phosphate. This is 3-phytase (phy) from Bacillus sp. (strain DS11).